A 209-amino-acid polypeptide reads, in one-letter code: Ribosomal RNA large subunit methyltransferase E (209 aa).

The S-adenosyl-L-methionine site is built by Gly-63, Trp-65, Asp-83, Asp-99, and Asp-124. The Proton acceptor role is filled by Lys-164.

The protein belongs to the class I-like SAM-binding methyltransferase superfamily. RNA methyltransferase RlmE family.

The protein localises to the cytoplasm. It carries out the reaction uridine(2552) in 23S rRNA + S-adenosyl-L-methionine = 2'-O-methyluridine(2552) in 23S rRNA + S-adenosyl-L-homocysteine + H(+). Its function is as follows. Specifically methylates the uridine in position 2552 of 23S rRNA at the 2'-O position of the ribose in the fully assembled 50S ribosomal subunit. The chain is Ribosomal RNA large subunit methyltransferase E from Aeromonas salmonicida (strain A449).